Consider the following 336-residue polypeptide: Holliday junction branch migration complex subunit RuvB (336 aa).

The segment at 4 to 185 (MDERLLSGES…FGVLSRLEYY (182 aa)) is large ATPase domain (RuvB-L). ATP-binding positions include Leu24, Arg25, Gly66, Lys69, Thr70, Thr71, 132–134 (EDF), Arg175, Tyr185, and Arg222. Thr70 contacts Mg(2+). The tract at residues 186-256 (TVDQLSAIVE…ITQMALELLQ (71 aa)) is small ATPAse domain (RuvB-S). The head domain (RuvB-H) stretch occupies residues 259-336 (KLGLDHIDHK…EHFGMEMPKV (78 aa)). Residues Arg314 and Arg319 each coordinate DNA.

It belongs to the RuvB family. As to quaternary structure, homohexamer. Forms an RuvA(8)-RuvB(12)-Holliday junction (HJ) complex. HJ DNA is sandwiched between 2 RuvA tetramers; dsDNA enters through RuvA and exits via RuvB. An RuvB hexamer assembles on each DNA strand where it exits the tetramer. Each RuvB hexamer is contacted by two RuvA subunits (via domain III) on 2 adjacent RuvB subunits; this complex drives branch migration. In the full resolvosome a probable DNA-RuvA(4)-RuvB(12)-RuvC(2) complex forms which resolves the HJ.

It localises to the cytoplasm. It carries out the reaction ATP + H2O = ADP + phosphate + H(+). The RuvA-RuvB-RuvC complex processes Holliday junction (HJ) DNA during genetic recombination and DNA repair, while the RuvA-RuvB complex plays an important role in the rescue of blocked DNA replication forks via replication fork reversal (RFR). RuvA specifically binds to HJ cruciform DNA, conferring on it an open structure. The RuvB hexamer acts as an ATP-dependent pump, pulling dsDNA into and through the RuvAB complex. RuvB forms 2 homohexamers on either side of HJ DNA bound by 1 or 2 RuvA tetramers; 4 subunits per hexamer contact DNA at a time. Coordinated motions by a converter formed by DNA-disengaged RuvB subunits stimulates ATP hydrolysis and nucleotide exchange. Immobilization of the converter enables RuvB to convert the ATP-contained energy into a lever motion, pulling 2 nucleotides of DNA out of the RuvA tetramer per ATP hydrolyzed, thus driving DNA branch migration. The RuvB motors rotate together with the DNA substrate, which together with the progressing nucleotide cycle form the mechanistic basis for DNA recombination by continuous HJ branch migration. Branch migration allows RuvC to scan DNA until it finds its consensus sequence, where it cleaves and resolves cruciform DNA. This is Holliday junction branch migration complex subunit RuvB from Bacillus thuringiensis (strain Al Hakam).